We begin with the raw amino-acid sequence, 414 residues long: MSLSTKLAITDVDLKGKNVLIRVDFNVPLDGDRITNNARIVGALPTIKYALEQQPKAVILMSHLGRPNGARVAKYSLKPVAAELSKLLGKPVKFLDDCVGPEVEKACKEAKGGEVILLENLRFHIEEEGSAKVDGKKVKADASAVEAFRKSLTSLGDIFVNDAFGTAHRAHSSMVGVDLPRVSGFLMKKELDYFSKALENPARPFLAILGGAKVADKIQLIDNLLDKVNRLIICGGMAFTFLKVLNGMKIGDSLFDEAGSKNVESMMAKAKKNNVEVFLPVDFVTADKFDKDAKVGSATAEEGIPDGWMGLDCGPKSSAKFAEVITTSKTIVWNGPAGVFEFDNFAKGTKSMLDACVKTCEAGNVVIVGGGDTATVAKKYGKEDALSHVSTGGGASLELLEGKALPGVVALSSK.

(2R)-3-phosphoglycerate is bound by residues valine 23, aspartate 24, phenylalanine 25, asparagine 26, arginine 39, serine 62, histidine 63, glycine 65, and arginine 66. Tyrosine 75 is modified (phosphotyrosine). Serine 76 carries the post-translational modification Phosphoserine. The (2R)-3-phosphoglycerate site is built by leucine 121 and arginine 122. A Phosphoserine modification is found at serine 143. (2R)-3-phosphoglycerate is bound by residues histidine 168 and arginine 169. Phosphoserine occurs at positions 172, 173, and 183. Residue glycine 211 coordinates ADP. Residue glycine 211 coordinates CDP. AMP contacts are provided by alanine 212 and lysine 213. Position 212 (alanine 212) interacts with ATP. Alanine 212 is a binding site for Mg(2+). Mg(2+) contacts are provided by alanine 215 and aspartate 216. Aspartate 216 provides a ligand contact to CDP. Residue lysine 217 participates in AMP binding. Lysine 217 contributes to the ATP binding site. An ADP-binding site is contributed by glycine 235. Glycine 235 contributes to the CDP binding site. Residue glycine 236 coordinates AMP. Glycine 236 serves as a coordination point for ATP. A phosphoserine mark is found at serine 253 and serine 260. The residue at position 299 (threonine 299) is a Phosphothreonine. Position 310 (glycine 310) interacts with AMP. Glycine 310 is a binding site for ATP. The residue at position 328 (serine 328) is a Phosphoserine. Glycine 335, alanine 337, and phenylalanine 340 together coordinate CDP. Phenylalanine 340 is a binding site for ADP. Glutamate 341 contacts AMP. Glutamate 341 is an ATP binding site. Residue serine 351 is modified to Phosphoserine. Residues aspartate 372 and threonine 373 each contribute to the ATP site. Residue aspartate 372 coordinates Mg(2+). Threonine 373 carries the post-translational modification Phosphothreonine. Residues serine 387, serine 390, serine 412, and serine 413 each carry the phosphoserine modification.

It belongs to the phosphoglycerate kinase family. Monomer. It depends on Mg(2+) as a cofactor.

It localises to the cytoplasm. Its subcellular location is the mitochondrion. It catalyses the reaction (2R)-3-phosphoglycerate + ATP = (2R)-3-phospho-glyceroyl phosphate + ADP. Its pathway is carbohydrate degradation; glycolysis; pyruvate from D-glyceraldehyde 3-phosphate: step 2/5. Catalyzes one of the two ATP producing reactions in the glycolytic pathway via the reversible conversion of 1,3-diphosphoglycerate to 3-phosphoglycerate. Both L- and D- forms of purine and pyrimidine nucleotides can be used as substrates, but the activity is much lower on pyrimidines. Negatively regulates the biosynthesis of acetyl-CoA from pyruvate in the mitochondrion. This Schizosaccharomyces pombe (strain 972 / ATCC 24843) (Fission yeast) protein is Phosphoglycerate kinase (pgk1).